The chain runs to 472 residues: Siroheme synthase (472 aa).

The interval 1–207 (MNFLPIFLDI…GKDQAAKAWL (207 aa)) is precorrin-2 dehydrogenase /sirohydrochlorin ferrochelatase. NAD(+) is bound by residues 22–23 (EV) and 43–44 (PR). Residue Ser-132 is modified to Phosphoserine. Residues 221–472 (GEVYLVGAGP…QPEGNLPGAE (252 aa)) form a uroporphyrinogen-III C-methyltransferase region. S-adenosyl-L-methionine is bound at residue Pro-230. Catalysis depends on Asp-253, which acts as the Proton acceptor. Residue Lys-275 is the Proton donor of the active site. Residues 306-308 (GGD), Ile-311, 336-337 (TA), Met-388, and Gly-417 each bind S-adenosyl-L-methionine.

The protein in the N-terminal section; belongs to the precorrin-2 dehydrogenase / sirohydrochlorin ferrochelatase family. It in the C-terminal section; belongs to the precorrin methyltransferase family.

The enzyme catalyses uroporphyrinogen III + 2 S-adenosyl-L-methionine = precorrin-2 + 2 S-adenosyl-L-homocysteine + H(+). It carries out the reaction precorrin-2 + NAD(+) = sirohydrochlorin + NADH + 2 H(+). The catalysed reaction is siroheme + 2 H(+) = sirohydrochlorin + Fe(2+). Its pathway is cofactor biosynthesis; adenosylcobalamin biosynthesis; precorrin-2 from uroporphyrinogen III: step 1/1. The protein operates within cofactor biosynthesis; adenosylcobalamin biosynthesis; sirohydrochlorin from precorrin-2: step 1/1. It functions in the pathway porphyrin-containing compound metabolism; siroheme biosynthesis; precorrin-2 from uroporphyrinogen III: step 1/1. It participates in porphyrin-containing compound metabolism; siroheme biosynthesis; siroheme from sirohydrochlorin: step 1/1. Its pathway is porphyrin-containing compound metabolism; siroheme biosynthesis; sirohydrochlorin from precorrin-2: step 1/1. Functionally, multifunctional enzyme that catalyzes the SAM-dependent methylations of uroporphyrinogen III at position C-2 and C-7 to form precorrin-2 via precorrin-1. Then it catalyzes the NAD-dependent ring dehydrogenation of precorrin-2 to yield sirohydrochlorin. Finally, it catalyzes the ferrochelation of sirohydrochlorin to yield siroheme. The polypeptide is Siroheme synthase (Nitrosospira multiformis (strain ATCC 25196 / NCIMB 11849 / C 71)).